Consider the following 692-residue polypeptide: Putative clathrin assembly protein At1g14910 (692 aa).

In terms of domain architecture, ENTH spans R24 to I161. Residues Y325–G383 form a disordered region. Positions E357–I376 are enriched in polar residues. Position 363 is a phosphoserine (S363). Residues F532–S548 form repeat 1. Residues F532–G666 form an 8 X 17 AA approximate tandem repeats region. The 2; truncated repeat unit spans residues F549–G564. 6 consecutive repeat copies span residues F565–A581, F582–G598, F599–G615, F616–G632, F633–G649, and L650–G666.

As to expression, expressed in the whole plant.

Its subcellular location is the membrane. The protein localises to the clathrin-coated pit. It is found in the golgi apparatus. It localises to the cytoplasmic vesicle. The protein resides in the clathrin-coated vesicle. The protein is Putative clathrin assembly protein At1g14910 of Arabidopsis thaliana (Mouse-ear cress).